Reading from the N-terminus, the 324-residue chain is Phospho-N-acetylmuramoyl-pentapeptide-transferase (324 aa).

The next 10 helical transmembrane spans lie at 9–29 (TFAV…PFLV), 54–74 (MGAV…SFIG), 77–97 (VSAA…LGFL), 117–137 (FLGQ…SDFA), 147–167 (IEVD…VGFS), 176–196 (LDGL…VIAF), 201–221 (MDVA…LLFN), 227–247 (IFMG…VSIL), 253–273 (LLLL…LQVF), and 304–324 (VLTF…VVIF).

This sequence belongs to the glycosyltransferase 4 family. MraY subfamily. Requires Mg(2+) as cofactor.

Its subcellular location is the cell membrane. It catalyses the reaction UDP-N-acetyl-alpha-D-muramoyl-L-alanyl-gamma-D-glutamyl-meso-2,6-diaminopimeloyl-D-alanyl-D-alanine + di-trans,octa-cis-undecaprenyl phosphate = di-trans,octa-cis-undecaprenyl diphospho-N-acetyl-alpha-D-muramoyl-L-alanyl-D-glutamyl-meso-2,6-diaminopimeloyl-D-alanyl-D-alanine + UMP. Its pathway is cell wall biogenesis; peptidoglycan biosynthesis. Functionally, catalyzes the initial step of the lipid cycle reactions in the biosynthesis of the cell wall peptidoglycan: transfers peptidoglycan precursor phospho-MurNAc-pentapeptide from UDP-MurNAc-pentapeptide onto the lipid carrier undecaprenyl phosphate, yielding undecaprenyl-pyrophosphoryl-MurNAc-pentapeptide, known as lipid I. This is Phospho-N-acetylmuramoyl-pentapeptide-transferase from Listeria welshimeri serovar 6b (strain ATCC 35897 / DSM 20650 / CCUG 15529 / CIP 8149 / NCTC 11857 / SLCC 5334 / V8).